Consider the following 329-residue polypeptide: MASQLTDAFARKFYYLRLSITDVCNFRCTYCLPDGYKPSGVTNKGFLTVDEIRRVTRAFARLGTEKVRLTGGEPSLRRDFTDIIAAVRENDAIRQIAVTTNGYRLERDVASWRDAGLTGINVSVDSLDARQFHAITGQDKFNQVMAGIDAAFEAGFEKVKVNTVLMRDVNHHQLDTFLNWIQHRPIQLRFIELMETGEGSELFRKHHISGQVLRDELLRRGWIHQLRQRSDGPAQVFCHPDYAGEIGLIMPYEKDFCATCNRLRVSSIGKLHLCLFGEGGVNLRDLLEDDTQQQALEARISAALREKKQTHFLHQNNTGITQNLSYIGG.

The Radical SAM core domain occupies 8–234; it reads AFARKFYYLR…QLRQRSDGPA (227 aa). R17 serves as a coordination point for GTP. [4Fe-4S] cluster contacts are provided by C24 and C28. Residue Y30 participates in S-adenosyl-L-methionine binding. C31 contributes to the [4Fe-4S] cluster binding site. R68 provides a ligand contact to GTP. G72 contributes to the S-adenosyl-L-methionine binding site. T99 is a binding site for GTP. S123 is an S-adenosyl-L-methionine binding site. Position 160 (K160) interacts with GTP. S-adenosyl-L-methionine is bound at residue M194. The [4Fe-4S] cluster site is built by C257 and C260. Residue 262 to 264 participates in GTP binding; that stretch reads RLR. C274 is a [4Fe-4S] cluster binding site.

It belongs to the radical SAM superfamily. MoaA family. In terms of assembly, monomer and homodimer. Requires [4Fe-4S] cluster as cofactor.

The catalysed reaction is GTP + AH2 + S-adenosyl-L-methionine = (8S)-3',8-cyclo-7,8-dihydroguanosine 5'-triphosphate + 5'-deoxyadenosine + L-methionine + A + H(+). It functions in the pathway cofactor biosynthesis; molybdopterin biosynthesis. Functionally, catalyzes the cyclization of GTP to (8S)-3',8-cyclo-7,8-dihydroguanosine 5'-triphosphate. The sequence is that of GTP 3',8-cyclase from Escherichia coli (strain K12 / MC4100 / BW2952).